A 269-amino-acid chain; its full sequence is MSQQNGNVNRVGAQDRVGASGGMEHSFGFKAVDENEKQGLVNDVFHKVAKRYDIMNDLMSAGMHRVWKDAMVAWLAPSKRPGWTSLDVAGGTGDIAFRIVEASGRQAHVTILDINGSMLGVGRERAIKKGLIDNLEFVEANAEELPFEDNSFDAYTIAFGIRNVPHIDKALSEAYRVLKPGGRFLCLEFSEVELPVLDKVYDEWSFRAIPRIGKMITGDADSYSYLVESIRKFPKQQDFAAMIEKAGFERVSYRNFTGGIAALHSGWKL.

S-adenosyl-L-methionine is bound by residues Thr-92, Asp-113, and 141 to 142 (NA).

It belongs to the class I-like SAM-binding methyltransferase superfamily. MenG/UbiE family.

The enzyme catalyses a 2-demethylmenaquinol + S-adenosyl-L-methionine = a menaquinol + S-adenosyl-L-homocysteine + H(+). It catalyses the reaction a 2-methoxy-6-(all-trans-polyprenyl)benzene-1,4-diol + S-adenosyl-L-methionine = a 5-methoxy-2-methyl-3-(all-trans-polyprenyl)benzene-1,4-diol + S-adenosyl-L-homocysteine + H(+). The protein operates within quinol/quinone metabolism; menaquinone biosynthesis; menaquinol from 1,4-dihydroxy-2-naphthoate: step 2/2. Its pathway is cofactor biosynthesis; ubiquinone biosynthesis. Its function is as follows. Methyltransferase required for the conversion of demethylmenaquinol (DMKH2) to menaquinol (MKH2) and the conversion of 2-polyprenyl-6-methoxy-1,4-benzoquinol (DDMQH2) to 2-polyprenyl-3-methyl-6-methoxy-1,4-benzoquinol (DMQH2). The chain is Ubiquinone/menaquinone biosynthesis C-methyltransferase UbiE from Brucella melitensis biotype 2 (strain ATCC 23457).